A 137-amino-acid polypeptide reads, in one-letter code: Acidic phospholipase A2 CC-PLA2-1 (137 aa).

The signal sequence occupies residues 1–16 (MRTLWIVAVWLMGVEG). 7 disulfide bridges follow: Cys-42–Cys-130, Cys-44–Cys-60, Cys-59–Cys-110, Cys-65–Cys-137, Cys-66–Cys-103, Cys-73–Cys-96, and Cys-90–Cys-101. Residues Tyr-43, Gly-45, and Gly-47 each coordinate Ca(2+). The active site involves His-63. Asp-64 contributes to the Ca(2+) binding site. The active site involves Asp-104.

This sequence belongs to the phospholipase A2 family. Group II subfamily. D49 sub-subfamily. It depends on Ca(2+) as a cofactor. Post-translationally, glycosylated (2.5%). Expressed by the venom gland.

The protein resides in the secreted. It carries out the reaction a 1,2-diacyl-sn-glycero-3-phosphocholine + H2O = a 1-acyl-sn-glycero-3-phosphocholine + a fatty acid + H(+). Its function is as follows. Snake venom phospholipase A2 (PLA2) that inhibits blood coagulation and platelet aggregation induced by ADP and arachidonic acid. Inhibits tumor cell adhesion and migration in a dose-dependent manner. Abolishes the attachment of human brain microvascular endothelial cells (HBMEC) to fibrinogen (IC(50)=0.12 uM) and dramatically reduces its adhesion to fibronectin (IC(50)=0.12 uM), whereas no effect is observed on type I collagen, vitronectin or laminin 1. Also blocks the cell migration toward fibronectin and fibrinogen. These effects are not dependent of the catalytic activity, but are mediated by alpha-5/beta-1 (ITGA5/ITGB1) and alpha-v-containing (ITGAV) integrins. Also shows anti-angiogenic activity in chicken chorioallantoix membrane assay. Has a relatively high enzymatic activity. PLA2 catalyzes the calcium-dependent hydrolysis of the 2-acyl groups in 3-sn-phosphoglycerides. The sequence is that of Acidic phospholipase A2 CC-PLA2-1 from Cerastes cerastes (Horned desert viper).